A 102-amino-acid chain; its full sequence is ATP-dependent Clp protease adapter protein ClpS (102 aa).

It belongs to the ClpS family. As to quaternary structure, binds to the N-terminal domain of the chaperone ClpA.

Involved in the modulation of the specificity of the ClpAP-mediated ATP-dependent protein degradation. This chain is ATP-dependent Clp protease adapter protein ClpS, found in Shewanella piezotolerans (strain WP3 / JCM 13877).